We begin with the raw amino-acid sequence, 599 residues long: Proline dehydrogenase 1, mitochondrial (599 aa).

Disordered stretches follow at residues 20 to 39 and 152 to 180; these read STKPQAQEQPPASPEALRGC and EEAERKEMESCTSEAERDGSGANKREKQY. Low complexity predominate over residues 23–39; sequence PQAQEQPPASPEALRGC. Basic and acidic residues predominate over residues 153–180; it reads EAERKEMESCTSEAERDGSGANKREKQY. An N6-acetyllysine mark is found at lysine 356, lysine 367, and lysine 485.

The protein belongs to the proline oxidase family. Requires FAD as cofactor. In terms of tissue distribution, expressed in liver, kidney, heart and to a lesser extent in brain, lung and muscle.

The protein resides in the mitochondrion matrix. It carries out the reaction L-proline + a quinone = (S)-1-pyrroline-5-carboxylate + a quinol + H(+). It participates in amino-acid degradation; L-proline degradation into L-glutamate; L-glutamate from L-proline: step 1/2. Its function is as follows. Converts proline to delta-1-pyrroline-5-carboxylate. The polypeptide is Proline dehydrogenase 1, mitochondrial (Prodh) (Mus musculus (Mouse)).